The primary structure comprises 465 residues: Probable Xaa-Pro aminopeptidase pepP (465 aa).

Positions 263, 274, 397, and 437 each coordinate Mn(2+).

Belongs to the peptidase M24B family. Mn(2+) is required as a cofactor.

The enzyme catalyses Release of any N-terminal amino acid, including proline, that is linked to proline, even from a dipeptide or tripeptide.. In terms of biological role, catalyzes the removal of a penultimate prolyl residue from the N-termini of peptides. This is Probable Xaa-Pro aminopeptidase pepP (pepP) from Penicillium rubens (strain ATCC 28089 / DSM 1075 / NRRL 1951 / Wisconsin 54-1255) (Penicillium chrysogenum).